Reading from the N-terminus, the 471-residue chain is Heat shock 70 kDa protein 13 (471 aa).

Positions 1–22 (MAGEMTILGSAVLTLLLAGYLA) are cleaved as a signal peptide. Positions 315 to 337 (ENDRKGPPTSDSELPKDKFSQAN) are disordered.

The protein belongs to the heat shock protein 70 family. As to quaternary structure, binds UBQLN2.

The protein localises to the microsome. It is found in the endoplasmic reticulum. Functionally, has peptide-independent ATPase activity. This Bos taurus (Bovine) protein is Heat shock 70 kDa protein 13 (HSPA13).